Reading from the N-terminus, the 167-residue chain is Protein DLS1 (167 aa).

Serine 17 carries the phosphoserine modification.

In terms of assembly, component of the ISW2 complex, which at least consists of ISW2, ITC1, DLS1 and DPB4.

It is found in the nucleus. In terms of biological role, functions as a component of the ISW2 complex, which acts in remodeling the chromatin by catalyzing an ATP-dependent alteration in the structure of nucleosomal DNA. The ISW2 complex is involved in coordinating transcriptional repression and in inheritance of telomeric silencing. It is involved in repression of MAT a-specific genes, INO1, and early meiotic genes during mitotic growth dependent upon transcription factor UME6 and in a parallel pathway to the RPD3-SIN3 histone deacetylase complex. DLS1 is partially required for the ISW2 complex chromatin remodeling activity and is not required for its interaction with chromatin. The sequence is that of Protein DLS1 (DLS1) from Saccharomyces cerevisiae (strain ATCC 204508 / S288c) (Baker's yeast).